The chain runs to 1077 residues: Serine/threonine-protein kinase sel-5 (1077 aa).

The Protein kinase domain maps to 47 to 317 (VTIEKQIAEG…IYQTSVLAFE (271 aa)). Residues 53–61 (IAEGGFAIV) and lysine 75 each bind ATP. Aspartate 178 functions as the Proton acceptor in the catalytic mechanism. Disordered regions lie at residues 347–444 (MRDG…TDGS), 488–554 (GFTD…SQVV), 616–813 (ELDS…TNPF), and 920–1077 (LISV…PTDL). The segment covering 369–399 (IQSSSKMASLSQQVPSISNISMPSGSGTVET) has biased composition (polar residues). The span at 491-515 (DLDKPALPRDRAQTDGKRRLPHESD) shows a compositional bias: basic and acidic residues. Low complexity predominate over residues 541-554 (SSQQTTSKTSSQVV). The segment covering 638-648 (LTVSTSSSAQP) has biased composition (polar residues). Residues 655–679 (TDEDDERQLLSETDEEEKYEIDEKE) are compositionally biased toward acidic residues. Basic and acidic residues-rich tracts occupy residues 697–708 (DEQRMNDRRRYS) and 739–751 (DSRRGGDTSHDED). Acidic residues predominate over residues 770 to 780 (EDDGLEDDDDH). The segment covering 799 to 810 (GTSTPHTQNPIT) has biased composition (polar residues). Pro residues predominate over residues 927–936 (TDPPPPPLPK). Residues 941–950 (ASPTQETTAT) show a composition bias toward polar residues. The span at 960-969 (KLLKKEKKKE) shows a compositional bias: basic residues. Residues 970–989 (KKDGKKDKLKLEEYREKGSS) are compositionally biased toward basic and acidic residues. The span at 1054–1067 (LTGKNASFVNTSFQ) shows a compositional bias: polar residues.

Belongs to the protein kinase superfamily. Ser/Thr protein kinase family. Mg(2+) serves as cofactor.

The protein localises to the cytoplasm. It catalyses the reaction L-seryl-[protein] + ATP = O-phospho-L-seryl-[protein] + ADP + H(+). The enzyme catalyses L-threonyl-[protein] + ATP = O-phospho-L-threonyl-[protein] + ADP + H(+). Its function is as follows. Serine/threonine-protein kinase which may play a role in lin-12-mediated cell-fate decisions. The protein is Serine/threonine-protein kinase sel-5 of Caenorhabditis elegans.